Here is a 558-residue protein sequence, read N- to C-terminus: Type I restriction enzyme MjaIX methylase subunit (558 aa).

The tract at residues 1–37 (MATLDKFLSIKENDEKTKKKESKKKSSKSNKTSESLV) is disordered. Basic and acidic residues predominate over residues 8–18 (LSIKENDEKTK). A compositionally biased stretch (basic residues) spans 19 to 28 (KKESKKKSSK). Residues 227–232 (KFYTPR), 256–258 (SGG), and aspartate 283 contribute to the S-adenosyl-L-methionine site.

It belongs to the N(4)/N(6)-methyltransferase family. The type I restriction/modification system is composed of three polypeptides R, M and S.

It carries out the reaction a 2'-deoxyadenosine in DNA + S-adenosyl-L-methionine = an N(6)-methyl-2'-deoxyadenosine in DNA + S-adenosyl-L-homocysteine + H(+). The subtype gamma methyltransferase (M) subunit of a type I restriction enzyme. The M and S subunits together form a methyltransferase (MTase) that methylates A-3 on the top and A-2 on the bottom strand of the sequence 5'-CCAN(5)GTR-3'. In the presence of the R subunit the complex can also act as an endonuclease, binding to the same target sequence but cutting the DNA some distance from this site. Whether the DNA is cut or modified depends on the methylation state of the target sequence. When the target site is unmodified, the DNA is cut. When the target site is hemimethylated, the complex acts as a maintenance MTase modifying the DNA so that both strands become methylated. After locating a non-methylated recognition site, the enzyme complex serves as a molecular motor that translocates DNA in an ATP-dependent manner until a collision occurs that triggers cleavage. This chain is Type I restriction enzyme MjaIX methylase subunit, found in Methanocaldococcus jannaschii (strain ATCC 43067 / DSM 2661 / JAL-1 / JCM 10045 / NBRC 100440) (Methanococcus jannaschii).